The primary structure comprises 124 residues: Glutaredoxin-2 (124 aa).

Cysteine 13 and cysteine 16 form a disulfide bridge.

This sequence belongs to the glutaredoxin family. As to quaternary structure, homodimer.

It localises to the host cytoplasm. In terms of biological role, glutaredoxin necessary for virion morphogenesis and virus replication. Functions as a thiol-disulfide transfer protein between membrane-associated OPG128 and substrates OPG095 or OPG053. The complete pathway for formation of disulfide bonds in intracellular virion membrane proteins sequentially involves oxidation of OPG072, OPG128 and OPG088. Exhibit thioltransferase and dehydroascorbate reductase activities in vitro. The chain is Glutaredoxin-2 (OPG088) from Camelus.